The primary structure comprises 256 residues: Imidazole glycerol phosphate synthase subunit HisF (256 aa).

Active-site residues include Asp-12 and Asp-131.

The protein belongs to the HisA/HisF family. In terms of assembly, heterodimer of HisH and HisF.

It localises to the cytoplasm. It catalyses the reaction 5-[(5-phospho-1-deoxy-D-ribulos-1-ylimino)methylamino]-1-(5-phospho-beta-D-ribosyl)imidazole-4-carboxamide + L-glutamine = D-erythro-1-(imidazol-4-yl)glycerol 3-phosphate + 5-amino-1-(5-phospho-beta-D-ribosyl)imidazole-4-carboxamide + L-glutamate + H(+). The protein operates within amino-acid biosynthesis; L-histidine biosynthesis; L-histidine from 5-phospho-alpha-D-ribose 1-diphosphate: step 5/9. Its function is as follows. IGPS catalyzes the conversion of PRFAR and glutamine to IGP, AICAR and glutamate. The HisF subunit catalyzes the cyclization activity that produces IGP and AICAR from PRFAR using the ammonia provided by the HisH subunit. The sequence is that of Imidazole glycerol phosphate synthase subunit HisF from Pseudomonas syringae pv. syringae (strain B728a).